The following is a 225-amino-acid chain: MKLIVSVMPRSLEEAQALDATRYLDADIIEWRADYLPKEAILQVAPAIFEKFAGRELVFTLRTRSEGGEIDLSPEEYIHLIKEVAQFYQPDYIDFEYYSYKDVFEEMLDFPNLVLSYHNFQETPENMMEILSELTILNPKLVKVAVMAHTEQDVLDLMNYTRGFKTLNPEQEYVTISMGKVGKVSRITADVTGSSWSFASLDEVSAPGQISLASMKKIREILDEA.

3-dehydroquinate is bound by residues serine 6, glutamate 30–arginine 32, and arginine 62. Histidine 118 functions as the Proton donor/acceptor in the catalytic mechanism. Residue lysine 143 is the Schiff-base intermediate with substrate of the active site. 3-dehydroquinate-binding residues include arginine 186, serine 205, and glutamine 209.

It belongs to the type-I 3-dehydroquinase family. As to quaternary structure, homodimer.

It catalyses the reaction 3-dehydroquinate = 3-dehydroshikimate + H2O. Its pathway is metabolic intermediate biosynthesis; chorismate biosynthesis; chorismate from D-erythrose 4-phosphate and phosphoenolpyruvate: step 3/7. Involved in the third step of the chorismate pathway, which leads to the biosynthesis of aromatic amino acids. Catalyzes the cis-dehydration of 3-dehydroquinate (DHQ) and introduces the first double bond of the aromatic ring to yield 3-dehydroshikimate. In Streptococcus pneumoniae (strain Hungary19A-6), this protein is 3-dehydroquinate dehydratase.